The sequence spans 538 residues: MVVVSQNYPTPDLHRVRRALLSVFDKTGLVEFAQELHAYGIELISTGGTSESLIAAGLPVKDVSEVTGFPQIMDGRVKTLHPLIHGGLLGVRDDPSHKAAMEKHGICGIDLVVVNLYPFEKTWQSGADSQTIIENIDIGGPAMIRAAAKNHAYTGVVTAVSDYDVVLAELKQHNGCLSFSLRRQLAARAYEHTAAYDAAIAAWFAQDLEVEMPSWQNFSGHFESMMRYGENPHQRAAFYRTRDTRFGVATAKVLQGKELSYNNMNDADAAFELVAEFDPQRTAAVALIKHANPCGVAEGQSLKEAYLKALMCDSVSAFGGIVALNQPLDEECAAEIVKLFTEVIIAPDATEAACNIIAQKKNLRLLITGGVPDPRCGGLTVKTLAGGVLVQSRDNAVVDDFDLQIVTKRAPSQDEMRDLQFAFRVVKHVKSNAIVYAKNSATVGIGAGQMSRLDSARIAVHKAEDNAKRMGLTESLTRGSVVASDAFFPFADGLISAAEAGVTAVIQPGGSIRDQEVIEAADARGLAMVFTGVRHFRH.

In terms of domain architecture, MGS-like spans 11-158 (PDLHRVRRAL…KNHAYTGVVT (148 aa)).

It belongs to the PurH family.

The catalysed reaction is (6R)-10-formyltetrahydrofolate + 5-amino-1-(5-phospho-beta-D-ribosyl)imidazole-4-carboxamide = 5-formamido-1-(5-phospho-D-ribosyl)imidazole-4-carboxamide + (6S)-5,6,7,8-tetrahydrofolate. It carries out the reaction IMP + H2O = 5-formamido-1-(5-phospho-D-ribosyl)imidazole-4-carboxamide. It participates in purine metabolism; IMP biosynthesis via de novo pathway; 5-formamido-1-(5-phospho-D-ribosyl)imidazole-4-carboxamide from 5-amino-1-(5-phospho-D-ribosyl)imidazole-4-carboxamide (10-formyl THF route): step 1/1. The protein operates within purine metabolism; IMP biosynthesis via de novo pathway; IMP from 5-formamido-1-(5-phospho-D-ribosyl)imidazole-4-carboxamide: step 1/1. In Bartonella bacilliformis (strain ATCC 35685 / KC583 / Herrer 020/F12,63), this protein is Bifunctional purine biosynthesis protein PurH.